The sequence spans 742 residues: UPF0313 protein MA_4618 (742 aa).

The interval 1–125 (MGVRKQTMVK…SFSSSLPASK (125 aa)) is disordered. A unknown region spans residues 1–128 (MGVRKQTMVK…SSLPASKFLP (128 aa)). 2 stretches are compositionally biased toward basic and acidic residues: residues 17 to 40 (ENKK…ERAG) and 49 to 73 (KKVE…KAEG). The span at 106-115 (TGKKEKKQKK) shows a compositional bias: basic residues. The segment at 129 to 742 (MSPEEVKARG…KCLIRRKEKQ (614 aa)) is UPF0313. In terms of domain architecture, Radical SAM core spans 438-707 (ALEMVKFSLT…AMQRALMHYR (270 aa)). The [4Fe-4S] cluster site is built by cysteine 452, cysteine 456, and cysteine 459.

The protein in the C-terminal section; belongs to the UPF0313 family. The cofactor is [4Fe-4S] cluster.

The sequence is that of UPF0313 protein MA_4618 from Methanosarcina acetivorans (strain ATCC 35395 / DSM 2834 / JCM 12185 / C2A).